Here is a 440-residue protein sequence, read N- to C-terminus: Replication factor C large subunit (440 aa).

48-55 lines the ATP pocket; that stretch reads GPPGVGKT.

The protein belongs to the activator 1 small subunits family. RfcL subfamily. In terms of assembly, heteromultimer composed of small subunits (RfcS) and large subunits (RfcL).

In terms of biological role, part of the RFC clamp loader complex which loads the PCNA sliding clamp onto DNA. This is Replication factor C large subunit from Sulfurisphaera tokodaii (strain DSM 16993 / JCM 10545 / NBRC 100140 / 7) (Sulfolobus tokodaii).